A 94-amino-acid polypeptide reads, in one-letter code: DASH complex subunit DAD5 (94 aa).

The span at 1–20 shows a compositional bias: low complexity; that stretch reads MRRSTIVPTSRTSSSSPSPS. The interval 1–25 is disordered; that stretch reads MRRSTIVPTSRTSSSSPSPSQMKSF.

The protein belongs to the DASH complex HSK3 family. Component of the DASH complex consisting of ask1, dad1, dad2, dad3, dad4, dam1, duo1, dad5, spc19 and spc34, with a stoichiometry of one copy of each subunit per complex. Multiple DASH complexes oligomerize to form a ring that encircles spindle microtubules and organizes the rod-like NDC80 complexes of the outer kinetochore. DASH complex oligomerization strengthens microtubule attachments. On cytoplasmic microtubules, DASH complexes appear to form patches instead of rings.

The protein resides in the nucleus. It localises to the cytoplasm. Its subcellular location is the cytoskeleton. The protein localises to the spindle. It is found in the chromosome. The protein resides in the centromere. It localises to the kinetochore. In terms of biological role, component of the DASH complex that connects microtubules with kinetochores and couples microtubule depolymerisation to chromosome movement; it is involved in retrieving kinetochores to the spindle poles before their re-orientation on the spindle in early mitosis and allows microtubule depolymerization to pull chromosomes apart and resist detachment during anaphase. Kinetochores, consisting of a centromere-associated inner segment and a microtubule-contacting outer segment, play a crucial role in chromosome segregation by mediating the physical connection between centromeric DNA and microtubules. Kinetochores also serve as an input point for the spindle assembly checkpoint, which delays anaphase until all chromosomes have bioriented on the mitotic spindle. The DASH complex mediates bipolar kinetochore-microtubule attachments and facilitates the formation of additional interactions between outer kinetochore components and spindle microtubules. During chromosome movement along the microtubule, it is required both for the sliding of kinetochores along the lateral side of the microtubule and also for microtubule end-on pulling on the kinetochore. Modulates cytoplasmic microtubule dynamics by tracking the plus-end of shortening microtubules and slowing their depolymerization. The polypeptide is DASH complex subunit DAD5 (Schizosaccharomyces pombe (strain 972 / ATCC 24843) (Fission yeast)).